The following is a 117-amino-acid chain: Small ribosomal subunit protein bS6 (117 aa).

Positions 96–117 are disordered; the sequence is KEAAAPAPKAAPVESAPAVEAE. Positions 99–117 are enriched in low complexity; sequence AAPAPKAAPVESAPAVEAE.

This sequence belongs to the bacterial ribosomal protein bS6 family.

Functionally, binds together with bS18 to 16S ribosomal RNA. This Geobacter sulfurreducens (strain ATCC 51573 / DSM 12127 / PCA) protein is Small ribosomal subunit protein bS6.